We begin with the raw amino-acid sequence, 281 residues long: ATP synthase gamma chain (281 aa).

This sequence belongs to the ATPase gamma chain family. In terms of assembly, F-type ATPases have 2 components, CF(1) - the catalytic core - and CF(0) - the membrane proton channel. CF(1) has five subunits: alpha(3), beta(3), gamma(1), delta(1), epsilon(1). CF(0) has three main subunits: a, b and c.

Its subcellular location is the cell membrane. Its function is as follows. Produces ATP from ADP in the presence of a proton gradient across the membrane. The gamma chain is believed to be important in regulating ATPase activity and the flow of protons through the CF(0) complex. This chain is ATP synthase gamma chain, found in Clostridium pasteurianum.